A 116-amino-acid polypeptide reads, in one-letter code: Ribonuclease P protein component (116 aa).

It belongs to the RnpA family. In terms of assembly, consists of a catalytic RNA component (M1 or rnpB) and a protein subunit.

It catalyses the reaction Endonucleolytic cleavage of RNA, removing 5'-extranucleotides from tRNA precursor.. In terms of biological role, RNaseP catalyzes the removal of the 5'-leader sequence from pre-tRNA to produce the mature 5'-terminus. It can also cleave other RNA substrates such as 4.5S RNA. The protein component plays an auxiliary but essential role in vivo by binding to the 5'-leader sequence and broadening the substrate specificity of the ribozyme. The polypeptide is Ribonuclease P protein component (Pseudanabaena sp. (strain PCC 6903)).